The chain runs to 96 residues: Large ribosomal subunit protein eL21 (96 aa).

This sequence belongs to the eukaryotic ribosomal protein eL21 family.

The polypeptide is Large ribosomal subunit protein eL21 (Methanosphaerula palustris (strain ATCC BAA-1556 / DSM 19958 / E1-9c)).